The chain runs to 318 residues: Acyl-CoA dehydrogenase IpdE2 (318 aa).

FAD contacts are provided by R210 and G277.

Belongs to the acyl-CoA dehydrogenase family. As to quaternary structure, heterotetramer composed of 2 IpdE1 subunits and 2 IpdE2 subunits. It depends on FAD as a cofactor.

It catalyses the reaction 3-[(3aS,4S,5R,7aS)-5-hydroxy-7a-methyl-1-oxo-octahydro-1H-inden-4-yl]propanoyl-CoA + A = (2E)-3-[(3aS,4S,5R,7aS)-5-hydroxy-7a-methyl-1-oxo-octahydro-1H-inden-4-yl]prop-2-enoyl-CoA + AH2. Its pathway is steroid metabolism; cholesterol degradation. Its function is as follows. Involved in cholesterol degradation. Catalyzes the dehydrogenation of 5OH-HIP-CoA to 5OH-HIPE-CoA. Can also use octanoyl-CoA and dihydroferuloyl-CoA, with lower efficiency. Cannot use 3-oxo-4-pregnene-20-carboxyl-CoA (3-OPC-CoA). This is Acyl-CoA dehydrogenase IpdE2 from Mycobacterium tuberculosis (strain ATCC 25618 / H37Rv).